The chain runs to 347 residues: D-alanine--D-alanine ligase (347 aa).

The 199-residue stretch at 134-332 folds into the ATP-grasp domain; sequence KLYAKDLGIK…LAQSLPKTPK (199 aa). 161–216 lines the ATP pocket; the sequence is LINFNFPFIIKPNSAGSSLGVSVVKEEKELNYALDSAFEYSKEVLIEPFIQGVKEY. Positions 288, 300, and 302 each coordinate Mg(2+).

It belongs to the D-alanine--D-alanine ligase family. Mg(2+) serves as cofactor. Requires Mn(2+) as cofactor.

It localises to the cytoplasm. It carries out the reaction 2 D-alanine + ATP = D-alanyl-D-alanine + ADP + phosphate + H(+). It functions in the pathway cell wall biogenesis; peptidoglycan biosynthesis. Functionally, cell wall formation. The sequence is that of D-alanine--D-alanine ligase from Helicobacter pylori (strain HPAG1).